The primary structure comprises 826 residues: U4/U6 snRNA-associated-splicing factor PRP24 (826 aa).

4 RRM domains span residues 310-385, 386-463, 477-554, and 598-670; these read TSVF…EAAG, ITLY…YSDP, REVH…LSVS, and RSFA…AVPQ.

It is found in the nucleus. Its function is as follows. Functions as a recycling factor of the spliceosome, a machinery that forms on each precursor-messenger RNA (pre-mRNA) and catalyzes the removal of introns. Chaperones the re-annealing of U4 and U6 snRNAs (small nuclear RNAs) released from previous rounds of splicing, an initial step in reforming the U4/U6-U5 tri-snRNP (small nuclear ribonucleoprotein) that can reassemble into another spliceosome complex; this step involves binding U6 and facilitating the unwinding of the U6 internal stem loop, followed by base-pairing of U6 to U4. In Ophiostoma ulmi (Dutch elm disease fungus), this protein is U4/U6 snRNA-associated-splicing factor PRP24.